The sequence spans 882 residues: Bifunctional heparan sulfate N-deacetylase/N-sulfotransferase 1 (882 aa).

Residues 1–17 (MPALACLRRLCRHLSPQ) are Cytoplasmic-facing. Residues 1 to 169 (MPALACLRRL…VAYGVGIIGF (169 aa)) are sufficient for localization to Golgi membrane. The chain crosses the membrane as a helical; Signal-anchor for type II membrane protein span at residues 18–38 (AVLFLLFVFCLFSVFVSAYYL). Over 39–882 (YGWNRGLEPS…WLREDLQNTR (844 aa)) the chain is Lumenal. Positions 40 to 598 (GWNRGLEPSA…KRHKDIWSKE (559 aa)) are heparan sulfate N-deacetylase 1. Asparagine 231, asparagine 351, and asparagine 401 each carry an N-linked (GlcNAc...) asparagine glycan. Residues 599–882 (KTCDRFPKLL…WLREDLQNTR (284 aa)) form a heparan sulfate N-sulfotransferase 1 region. Lysine 614 serves as the catalytic For sulfotransferase activity. 614–618 (KTGTT) is a binding site for adenosine 3',5'-bisphosphate. N-linked (GlcNAc...) asparagine glycosylation is present at asparagine 667. Positions 712 and 817 each coordinate adenosine 3',5'-bisphosphate. Cysteine 818 and cysteine 828 are disulfide-bonded. Adenosine 3',5'-bisphosphate is bound at residue 833 to 837 (KGRKY).

The protein belongs to the sulfotransferase 1 family. NDST subfamily. Monomer. Interacts with heparan sulfate co-polymerase subunits EXT1 and EXT2. Widely expressed in adult and throughout development.

The protein localises to the golgi apparatus membrane. Its subcellular location is the golgi apparatus. It is found in the trans-Golgi network membrane. It localises to the cis-Golgi network membrane. It catalyses the reaction N-acetyl-alpha-D-glucosaminyl-[heparan sulfate](n) + H2O = alpha-D-glucosaminyl-[heparan sulfate](n) + acetate. The enzyme catalyses alpha-D-glucosaminyl-[heparan sulfate](n) + 3'-phosphoadenylyl sulfate = N-sulfo-alpha-D-glucosaminyl-[heparan sulfate](n) + adenosine 3',5'-bisphosphate + 2 H(+). It participates in glycan metabolism; heparan sulfate biosynthesis. Its pathway is glycan metabolism; heparin biosynthesis. Inhibited by long N-sulfated sequences (more than 6 sugar residues) accumulating in its substrates heparan sulfate, and heparin. In terms of biological role, essential bifunctional enzyme that catalyzes both the N-deacetylation and the N-sulfation of glucosamine (GlcNAc) of the glycosaminoglycan in heparan sulfate. Modifies the GlcNAc-GlcA disaccharide repeating sugar backbone to make N-sulfated heparosan, a prerequisite substrate for later modifications in heparin biosynthesis. Plays a role in determining the extent and pattern of sulfation of heparan sulfate. Participates in biosynthesis of heparan sulfate that can ultimately serve as L-selectin ligands, thereby playing a role in inflammatory response. Required for the exosomal release of SDCBP, CD63 and syndecan. The polypeptide is Bifunctional heparan sulfate N-deacetylase/N-sulfotransferase 1 (Mus musculus (Mouse)).